The sequence spans 668 residues: Alpha-1,4-glucan:maltose-1-phosphate maltosyltransferase (668 aa).

The interval 263–288 (RKGRNNSLTPAPDDPGSPYAIGSEEG) is disordered. 3 residues coordinate alpha-maltose 1-phosphate: lysine 264, glutamine 324, and aspartate 359. Aspartate 395 serves as the catalytic Nucleophile. Residue asparagine 396 coordinates alpha-maltose 1-phosphate. Glutamate 424 (proton donor) is an active-site residue. An alpha-maltose 1-phosphate-binding site is contributed by 535-536 (KY).

Belongs to the glycosyl hydrolase 13 family. GlgE subfamily. As to quaternary structure, homodimer.

It catalyses the reaction alpha-maltose 1-phosphate + [(1-&gt;4)-alpha-D-glucosyl](n) = [(1-&gt;4)-alpha-D-glucosyl](n+2) + phosphate. Its function is as follows. Maltosyltransferase that uses maltose 1-phosphate (M1P) as the sugar donor to elongate linear or branched alpha-(1-&gt;4)-glucans. Is involved in a branched alpha-glucan biosynthetic pathway from trehalose, together with TreS, Mak and GlgB. This Cereibacter sphaeroides (strain ATCC 17023 / DSM 158 / JCM 6121 / CCUG 31486 / LMG 2827 / NBRC 12203 / NCIMB 8253 / ATH 2.4.1.) (Rhodobacter sphaeroides) protein is Alpha-1,4-glucan:maltose-1-phosphate maltosyltransferase.